Consider the following 662-residue polypeptide: Glycogen debranching enzyme (662 aa).

Residue Asp338 is the Nucleophile of the active site. The active-site Proton donor is Glu373.

The protein belongs to the glycosyl hydrolase 13 family.

The catalysed reaction is Hydrolysis of (1-&gt;6)-alpha-D-glucosidic linkages to branches with degrees of polymerization of three or four glucose residues in limit dextrin.. The protein operates within glycan degradation; glycogen degradation. Its function is as follows. Removes maltotriose and maltotetraose chains that are attached by 1,6-alpha-linkage to the limit dextrin main chain, generating a debranched limit dextrin. The sequence is that of Glycogen debranching enzyme from Yersinia pestis.